Consider the following 199-residue polypeptide: Recombination protein RecR (199 aa).

The segment at 58–73 adopts a C4-type zinc-finger fold; that stretch reads CKVCTNLTDQEVCNIC. Residues 81–176 enclose the Toprim domain; the sequence is LLICVVEDPR…KVSRIAHGIP (96 aa).

It belongs to the RecR family.

In terms of biological role, may play a role in DNA repair. It seems to be involved in an RecBC-independent recombinational process of DNA repair. It may act with RecF and RecO. This chain is Recombination protein RecR, found in Alkaliphilus oremlandii (strain OhILAs) (Clostridium oremlandii (strain OhILAs)).